The sequence spans 388 residues: MPLQDFLFTSESVTEGHPDKMADQISDAVLDAVLRQDPKGRVACETLLKTGYVMIAGEITTKARIDYPKLARETVRRIGYTSGDMGFDANTCAVLVAVDQQSPDIGQGVDTGGAGDQGMMFGYACDETPELMPAPIQYAHAVTKQLAKARRAGLDLLRPDGKSQVSVEYRDGRPVRIDTVVVSTQHAESVSNKRLHEAVREQVIAKALPKRLLDRKTRILINPTGRFVIGGPMGDTGVTGRKIIVDTYGGMGRHGGGAFSGKDPSKVDRSAAYMGRYIAKNVVAAGLASRCEVQVAYAIGVAEPVSVMVDTFGTAKVPEGKIARAVREVFGLTPRAIIEGLDLLRPVYEKTAAYGHFGRTEKTFTWERTDKKEALADAAGLSKIRAVI.

An ATP-binding site is contributed by H17. Residue D19 participates in Mg(2+) binding. Residue E45 coordinates K(+). The L-methionine site is built by E58 and Q101. The flexible loop stretch occupies residues 101 to 111 (QSPDIGQGVDT). Residues 160–162 (DGK), 226–227 (RF), D235, 241–242 (RK), A258, and K262 contribute to the ATP site. D235 is an L-methionine binding site. K266 provides a ligand contact to L-methionine.

Belongs to the AdoMet synthase family. Homotetramer; dimer of dimers. The cofactor is Mg(2+). K(+) is required as a cofactor.

Its subcellular location is the cytoplasm. It catalyses the reaction L-methionine + ATP + H2O = S-adenosyl-L-methionine + phosphate + diphosphate. Its pathway is amino-acid biosynthesis; S-adenosyl-L-methionine biosynthesis; S-adenosyl-L-methionine from L-methionine: step 1/1. In terms of biological role, catalyzes the formation of S-adenosylmethionine (AdoMet) from methionine and ATP. The overall synthetic reaction is composed of two sequential steps, AdoMet formation and the subsequent tripolyphosphate hydrolysis which occurs prior to release of AdoMet from the enzyme. This is S-adenosylmethionine synthase from Anaeromyxobacter sp. (strain K).